Here is a 296-residue protein sequence, read N- to C-terminus: tRNA pseudouridine synthase B (296 aa).

Asp-38 serves as the catalytic Nucleophile.

The protein belongs to the pseudouridine synthase TruB family. Type 1 subfamily.

The catalysed reaction is uridine(55) in tRNA = pseudouridine(55) in tRNA. In terms of biological role, responsible for synthesis of pseudouridine from uracil-55 in the psi GC loop of transfer RNAs. In Ehrlichia chaffeensis (strain ATCC CRL-10679 / Arkansas), this protein is tRNA pseudouridine synthase B.